A 254-amino-acid polypeptide reads, in one-letter code: 3-deoxy-manno-octulosonate cytidylyltransferase (254 aa).

The protein belongs to the KdsB family.

It localises to the cytoplasm. It catalyses the reaction 3-deoxy-alpha-D-manno-oct-2-ulosonate + CTP = CMP-3-deoxy-beta-D-manno-octulosonate + diphosphate. It functions in the pathway nucleotide-sugar biosynthesis; CMP-3-deoxy-D-manno-octulosonate biosynthesis; CMP-3-deoxy-D-manno-octulosonate from 3-deoxy-D-manno-octulosonate and CTP: step 1/1. The protein operates within bacterial outer membrane biogenesis; lipopolysaccharide biosynthesis. Functionally, activates KDO (a required 8-carbon sugar) for incorporation into bacterial lipopolysaccharide in Gram-negative bacteria. The chain is 3-deoxy-manno-octulosonate cytidylyltransferase from Polynucleobacter asymbioticus (strain DSM 18221 / CIP 109841 / QLW-P1DMWA-1) (Polynucleobacter necessarius subsp. asymbioticus).